The primary structure comprises 353 residues: Photosystem II protein D1 (353 aa).

Threonine 2 bears the N-acetylthreonine mark. Phosphothreonine is present on threonine 2. 3 consecutive transmembrane segments (helical) span residues 29–46 (YIGWFGVLMIPTLLTATS), 118–133 (HFLLGVACYMGREWEL), and 142–156 (WIAVAYSAPVAAATA). Histidine 118 is a chlorophyll a binding site. Tyrosine 126 provides a ligand contact to pheophytin a. [CaMn4O5] cluster-binding residues include aspartate 170 and glutamate 189. Residues 197 to 218 (FHMLGVAGVFGGSLFSAMHGSL) traverse the membrane as a helical segment. Chlorophyll a is bound at residue histidine 198. A quinone-binding positions include histidine 215 and 264-265 (SF). Histidine 215 is a Fe cation binding site. Histidine 272 serves as a coordination point for Fe cation. A helical transmembrane segment spans residues 274–288 (FLAAWPVVGIWFTAL). Residues histidine 332, glutamate 333, aspartate 342, and alanine 344 each contribute to the [CaMn4O5] cluster site. A propeptide spanning residues 345–353 (AVEANSIDG) is cleaved from the precursor.

This sequence belongs to the reaction center PufL/M/PsbA/D family. As to quaternary structure, PSII is composed of 1 copy each of membrane proteins PsbA, PsbB, PsbC, PsbD, PsbE, PsbF, PsbH, PsbI, PsbJ, PsbK, PsbL, PsbM, PsbT, PsbX, PsbY, PsbZ, Psb30/Ycf12, at least 3 peripheral proteins of the oxygen-evolving complex and a large number of cofactors. It forms dimeric complexes. The D1/D2 heterodimer binds P680, chlorophylls that are the primary electron donor of PSII, and subsequent electron acceptors. It shares a non-heme iron and each subunit binds pheophytin, quinone, additional chlorophylls, carotenoids and lipids. D1 provides most of the ligands for the Mn4-Ca-O5 cluster of the oxygen-evolving complex (OEC). There is also a Cl(-1) ion associated with D1 and D2, which is required for oxygen evolution. The PSII complex binds additional chlorophylls, carotenoids and specific lipids. serves as cofactor. Post-translationally, tyr-161 forms a radical intermediate that is referred to as redox-active TyrZ, YZ or Y-Z. In terms of processing, C-terminally processed by CTPA; processing is essential to allow assembly of the oxygen-evolving complex and thus photosynthetic growth.

Its subcellular location is the plastid. The protein resides in the chloroplast thylakoid membrane. The enzyme catalyses 2 a plastoquinone + 4 hnu + 2 H2O = 2 a plastoquinol + O2. Photosystem II (PSII) is a light-driven water:plastoquinone oxidoreductase that uses light energy to abstract electrons from H(2)O, generating O(2) and a proton gradient subsequently used for ATP formation. It consists of a core antenna complex that captures photons, and an electron transfer chain that converts photonic excitation into a charge separation. The D1/D2 (PsbA/PsbD) reaction center heterodimer binds P680, the primary electron donor of PSII as well as several subsequent electron acceptors. The protein is Photosystem II protein D1 of Cryptomeria japonica (Japanese cedar).